A 245-amino-acid polypeptide reads, in one-letter code: 1-(5-phosphoribosyl)-5-[(5-phosphoribosylamino)methylideneamino] imidazole-4-carboxamide isomerase (245 aa).

Asp-7 serves as the catalytic Proton acceptor. Asp-129 serves as the catalytic Proton donor.

It belongs to the HisA/HisF family.

The protein localises to the cytoplasm. The enzyme catalyses 1-(5-phospho-beta-D-ribosyl)-5-[(5-phospho-beta-D-ribosylamino)methylideneamino]imidazole-4-carboxamide = 5-[(5-phospho-1-deoxy-D-ribulos-1-ylimino)methylamino]-1-(5-phospho-beta-D-ribosyl)imidazole-4-carboxamide. It functions in the pathway amino-acid biosynthesis; L-histidine biosynthesis; L-histidine from 5-phospho-alpha-D-ribose 1-diphosphate: step 4/9. In Vibrio campbellii (strain ATCC BAA-1116), this protein is 1-(5-phosphoribosyl)-5-[(5-phosphoribosylamino)methylideneamino] imidazole-4-carboxamide isomerase.